The primary structure comprises 200 residues: Holliday junction branch migration complex subunit RuvA (200 aa).

Residues 1–63 form a domain I region; that stretch reads MIALLTGQIA…EDAILLYGFR (63 aa). The domain II stretch occupies residues 64–142; sequence TRTEKSFFQL…KLDSGSIPAG (79 aa). The tract at residues 143–153 is flexible linker; sequence DAVGRSLPAGS. The tract at residues 153 to 200 is domain III; the sequence is SVLDDVSSALVNLGYKDPQVRKVLAELDCAGSASVEEVLKQALKILMK.

It belongs to the RuvA family. In terms of assembly, homotetramer. Forms an RuvA(8)-RuvB(12)-Holliday junction (HJ) complex. HJ DNA is sandwiched between 2 RuvA tetramers; dsDNA enters through RuvA and exits via RuvB. An RuvB hexamer assembles on each DNA strand where it exits the tetramer. Each RuvB hexamer is contacted by two RuvA subunits (via domain III) on 2 adjacent RuvB subunits; this complex drives branch migration. In the full resolvosome a probable DNA-RuvA(4)-RuvB(12)-RuvC(2) complex forms which resolves the HJ.

The protein resides in the cytoplasm. Functionally, the RuvA-RuvB-RuvC complex processes Holliday junction (HJ) DNA during genetic recombination and DNA repair, while the RuvA-RuvB complex plays an important role in the rescue of blocked DNA replication forks via replication fork reversal (RFR). RuvA specifically binds to HJ cruciform DNA, conferring on it an open structure. The RuvB hexamer acts as an ATP-dependent pump, pulling dsDNA into and through the RuvAB complex. HJ branch migration allows RuvC to scan DNA until it finds its consensus sequence, where it cleaves and resolves the cruciform DNA. The sequence is that of Holliday junction branch migration complex subunit RuvA from Trichlorobacter lovleyi (strain ATCC BAA-1151 / DSM 17278 / SZ) (Geobacter lovleyi).